Consider the following 757-residue polypeptide: 5-methyltetrahydropteroyltriglutamate--homocysteine methyltransferase (757 aa).

5-methyltetrahydropteroyltri-L-glutamate-binding positions include Arg17–Lys20 and Lys115. Residues Ile430–Ser432 and Glu483 each bind L-homocysteine. Residues Ile430–Ser432 and Glu483 contribute to the L-methionine site. Residues Arg514–Cys515 and Trp560 contribute to the 5-methyltetrahydropteroyltri-L-glutamate site. Asp598 contacts L-homocysteine. Asp598 contributes to the L-methionine binding site. Glu604 contacts 5-methyltetrahydropteroyltri-L-glutamate. Positions 640, 642, and 664 each coordinate Zn(2+). The Proton donor role is filled by His693. Cys725 is a Zn(2+) binding site.

The protein belongs to the vitamin-B12 independent methionine synthase family. Requires Zn(2+) as cofactor.

It catalyses the reaction 5-methyltetrahydropteroyltri-L-glutamate + L-homocysteine = tetrahydropteroyltri-L-glutamate + L-methionine. The protein operates within amino-acid biosynthesis; L-methionine biosynthesis via de novo pathway; L-methionine from L-homocysteine (MetE route): step 1/1. Functionally, catalyzes the transfer of a methyl group from 5-methyltetrahydrofolate to homocysteine resulting in methionine formation. In Buchnera aphidicola subsp. Schizaphis graminum (strain Sg), this protein is 5-methyltetrahydropteroyltriglutamate--homocysteine methyltransferase.